A 380-amino-acid chain; its full sequence is 1-deoxy-D-xylulose 5-phosphate reductoisomerase (380 aa).

Positions 10, 11, 12, 13, 36, 37, 38, and 120 each coordinate NADPH. Lys-121 is a 1-deoxy-D-xylulose 5-phosphate binding site. Residue Glu-122 coordinates NADPH. Asp-146 lines the Mn(2+) pocket. Positions 147, 148, 172, and 195 each coordinate 1-deoxy-D-xylulose 5-phosphate. Glu-148 is a binding site for Mn(2+). Gly-201 provides a ligand contact to NADPH. Residues Ser-208, Asn-213, Lys-214, and Glu-217 each coordinate 1-deoxy-D-xylulose 5-phosphate. Glu-217 is a Mn(2+) binding site.

The protein belongs to the DXR family. The cofactor is Mg(2+). It depends on Mn(2+) as a cofactor.

The catalysed reaction is 2-C-methyl-D-erythritol 4-phosphate + NADP(+) = 1-deoxy-D-xylulose 5-phosphate + NADPH + H(+). Its pathway is isoprenoid biosynthesis; isopentenyl diphosphate biosynthesis via DXP pathway; isopentenyl diphosphate from 1-deoxy-D-xylulose 5-phosphate: step 1/6. Its function is as follows. Catalyzes the NADPH-dependent rearrangement and reduction of 1-deoxy-D-xylulose-5-phosphate (DXP) to 2-C-methyl-D-erythritol 4-phosphate (MEP). This Bacillus cereus (strain Q1) protein is 1-deoxy-D-xylulose 5-phosphate reductoisomerase.